Consider the following 195-residue polypeptide: Glycerol-3-phosphate acyltransferase (195 aa).

5 consecutive transmembrane segments (helical) span residues 3 to 23, 53 to 73, 80 to 100, 115 to 135, and 147 to 167; these read IHAV…GLIL, AVMT…LAKI, FAFI…WLLF, LIEY…FAIF, and IFVA…VFIA.

The protein belongs to the PlsY family. As to quaternary structure, probably interacts with PlsX.

It is found in the cell inner membrane. The catalysed reaction is an acyl phosphate + sn-glycerol 3-phosphate = a 1-acyl-sn-glycero-3-phosphate + phosphate. Its pathway is lipid metabolism; phospholipid metabolism. Functionally, catalyzes the transfer of an acyl group from acyl-phosphate (acyl-PO(4)) to glycerol-3-phosphate (G3P) to form lysophosphatidic acid (LPA). This enzyme utilizes acyl-phosphate as fatty acyl donor, but not acyl-CoA or acyl-ACP. In Ehrlichia chaffeensis (strain ATCC CRL-10679 / Arkansas), this protein is Glycerol-3-phosphate acyltransferase.